The chain runs to 127 residues: Small ribosomal subunit protein uS17m (127 aa).

Belongs to the universal ribosomal protein uS17 family.

It localises to the mitochondrion. In Dictyostelium discoideum (Social amoeba), this protein is Small ribosomal subunit protein uS17m (mrps17).